Reading from the N-terminus, the 138-residue chain is Small ribosomal subunit protein uS11 (138 aa).

The segment covering 1 to 12 has biased composition (low complexity); that stretch reads MAQAKKGGTAAK. Disordered stretches follow at residues 1–32 and 119–138; these read MAQAKKGGTAAKKGQKTRRREKKNVPHGAAHI and ISDVTPQPHNGCRPPKRRRV. The segment covering 13–22 has biased composition (basic residues); the sequence is KGQKTRRREK.

The protein belongs to the universal ribosomal protein uS11 family. As to quaternary structure, part of the 30S ribosomal subunit. Interacts with proteins S7 and S18. Binds to IF-3.

Its function is as follows. Located on the platform of the 30S subunit, it bridges several disparate RNA helices of the 16S rRNA. Forms part of the Shine-Dalgarno cleft in the 70S ribosome. This chain is Small ribosomal subunit protein uS11, found in Mycolicibacterium smegmatis (strain ATCC 700084 / mc(2)155) (Mycobacterium smegmatis).